The following is an 874-amino-acid chain: Adhesion G-protein coupled receptor D1 (874 aa).

A signal peptide spans 1–25 (MEKLLRLCCWYSWLLLFYYNFQVRG). The Extracellular portion of the chain corresponds to 26–567 (VYSRSQDHPG…LARGHQVALS (542 aa)). Positions 79–276 (KGVTLLYYGR…ASPVMPTDAY (198 aa)) constitute a Pentraxin (PTX) domain. 9 N-linked (GlcNAc...) asparagine glycosylation sites follow: Asn90, Asn185, Asn282, Asn302, Asn319, Asn394, Asn476, Asn501, and Asn533. The GAIN-B domain occupies 371–557 (QVTVEGSSAM…AILMQVVPLE (187 aa)). Cystine bridges form between Cys510/Cys539 and Cys527/Cys541. Positions 510 to 557 (CAFLDFSSGEGVWSNHGCALTRGNLTYSVCRCTHLTNFAILMQVVPLE) are GPS. The interval 546–554 (NFAILMQVV) is stachel. Gln563 contacts 17beta-hydroxy-5alpha-androstan-3-one. The chain crosses the membrane as a helical span at residues 568–590 (SISYVGCSLSVLCLVATLVTFAV). The Cytoplasmic segment spans residues 591–601 (LSSVSTIRNQR). The chain crosses the membrane as a helical span at residues 602–623 (YHIHANLSFAVLVAQVLLLISF). Topologically, residues 624–632 (RLEPGTTPC) are extracellular. An intrachain disulfide couples Cys632 to Cys704. Residues 633–655 (QVMAVLLHYFFLSAFAWMLVEGL) form a helical membrane-spanning segment. The Cytoplasmic portion of the chain corresponds to 656–673 (HLYSMVIKVFGSEDSKHR). Residues 674 to 695 (YYYGMGWGFPLLICIISLSFAM) form a helical membrane-spanning segment. Residues 696–710 (DSYGTSNNCWLSLAS) lie on the Extracellular side of the membrane. A helical membrane pass occupies residues 711–732 (GAIWAFVAPALFVIVVNIGILI). The Cytoplasmic portion of the chain corresponds to 733-757 (AVTRVISQISADNYKIHGDPSAFKL). Residues 758 to 780 (TAKAVAVLLPILGTSWVFGVLAV) form a helical membrane-spanning segment. Topologically, residues 781 to 783 (NGC) are extracellular. The chain crosses the membrane as a helical span at residues 784–810 (AVVFQYMFATLNSLQGLFIFLFHCLLN). Residue Asn795 coordinates 17beta-hydroxy-5alpha-androstan-3-one. The Cytoplasmic segment spans residues 811–874 (SEVRAAFKHK…SAHRVDLSAV (64 aa)). The disordered stretch occupies residues 854–874 (TKLSPWDKSSHSAHRVDLSAV). Positions 861-874 (KSSHSAHRVDLSAV) are enriched in basic and acidic residues.

This sequence belongs to the G-protein coupled receptor 2 family. Adhesion G-protein coupled receptor (ADGR) subfamily. As to quaternary structure, heterodimer of 2 chains generated by proteolytic processing; the large extracellular N-terminal fragment and the membrane-bound C-terminal fragment predominantly remain associated and non-covalently linked. Interacts with ESYT1; interaction takes place in absence of cytosolic calcium and inhibits the G protein-coupled receptor activity of ADGRD1. Autoproteolytically processed at the GPS region of the GAIN-B domain; this cleavage modulates receptor activity. Cleavage takes place early in the secretory pathway before N-glycosylation. As to expression, up-regulated in CD133(+) cell population of glioblastoma.

The protein localises to the cell membrane. Forms a heterodimer of 2 chains generated by proteolytic processing that remain associated through non-covalent interactions mediated by the GAIN-B domain. In the inactivated receptor, the Stachel sequence (also named stalk) is embedded in the GAIN-B domain, where it adopts a beta-strand conformation. On activation, the Stachel moves into the 7 transmembrane region and adopts a twisted hook-shaped configuration that forms contacts within the receptor, leading to coupling of a G-alpha protein, which activates signaling. The cleaved GAIN-B and N-terminal domains can then dissociate from the rest of the receptor. Interaction with ESYT1 in absence of cytosolic calcium inhibits the G protein-coupled receptor activity; interaction and inhibition is relieved when cytosolic calcium increases. Activated by AP503, a small molecule that activates ADGRD1 without activating androgen nuclear receptors: AP503 enhances muscle strength without eliciting androgenic adverse effects. Activated by the 8E3E8 antibody that targets the N-terminus. Its function is as follows. Adhesion G-protein coupled receptor (aGPCR) for androgen hormone 5alpha-dihydrotestosterone (5alpha-DHT), also named 17beta-hydroxy-5alpha-androstan-3-one, the most potent hormone among androgens. Also activated by methenolone drug. Ligand binding causes a conformation change that triggers signaling via guanine nucleotide-binding proteins (G proteins) and modulates the activity of downstream effectors, such as adenylate cyclase. ADGRD1 is coupled to G(s) G proteins and mediates activation of adenylate cyclase activity. Acts as a 5alpha-DHT receptor in muscle cells, thereby increasing intracellular cyclic AMP (cAMP) levels and enhancing muscle strength. This Homo sapiens (Human) protein is Adhesion G-protein coupled receptor D1.